A 617-amino-acid chain; its full sequence is Proline--tRNA ligase (617 aa).

It belongs to the class-II aminoacyl-tRNA synthetase family. ProS type 1 subfamily. Homodimer.

The protein resides in the cytoplasm. It carries out the reaction tRNA(Pro) + L-proline + ATP = L-prolyl-tRNA(Pro) + AMP + diphosphate. Functionally, catalyzes the attachment of proline to tRNA(Pro) in a two-step reaction: proline is first activated by ATP to form Pro-AMP and then transferred to the acceptor end of tRNA(Pro). As ProRS can inadvertently accommodate and process non-cognate amino acids such as alanine and cysteine, to avoid such errors it has two additional distinct editing activities against alanine. One activity is designated as 'pretransfer' editing and involves the tRNA(Pro)-independent hydrolysis of activated Ala-AMP. The other activity is designated 'posttransfer' editing and involves deacylation of mischarged Ala-tRNA(Pro). The misacylated Cys-tRNA(Pro) is not edited by ProRS. The protein is Proline--tRNA ligase of Treponema pallidum (strain Nichols).